Reading from the N-terminus, the 758-residue chain is MTILNHTLGFPRVGLKRELKKAQESYWAGNSTQEELLNVGRELRARHWQQQQQAGVDLVPVGDFAWYDHVLTTSLLLGNVPERHQNADGSIDIDTLFRIGRGRAPTGKPAAAAEMTKWFNTNYHYMVPEFQQGQQFKLGWTQLLDEVDEALALGHKIKPVLLGPITYLWLGKVKGEQFDRLSLLNDILPVYQQVLAELAKRGIEWVQIDEPALVLELPQEWLDAYQPAYQALQGQVKLLLTTYFDSIGHNIDTIRALPVQGLHVDVVAGHDDLAVLNKNLPKEWLLSLGVINGRNVWRADLSSWFERLQPLVNSRPLWLGSSCSLLHSPIDLNEETRLDAEVKSWFAFALQKCAELALLTQALNAPNDAKLAELAAYSAPIRARRSSSRVHNAQVEQRLAAITSQDIERQLPYEARAETQRKRFNLPAWPTTTIGSFPQTTEIRGLRLDFKQGRLDGKNYRTGISEHIKHAIAEQERLGLDVLVHGEAERNDMVEYFGEHLDGFVFTQNGWVQSYGSRCVKPPVIIGDISRPEAITVEWAKYAQSLTEKPVKGMLTGPVTILCWSFPREDVSRETIAKQIALALRDEVEDLEKAGIGIIQIDEPALREGLPLRRADWQAYLQWAVDAFKLNAAVAQNDTQIHTHMCYCEFNDIMDSIAALDADVITIETSRSDMELLESFEDFAYPNEIGPGVYDIHSPNVPSVEWIEALLRKAAQRIPAERLWVNPDCGLKTRGWPETRQALANMVLAAQRLREEQV.

5-methyltetrahydropteroyltri-L-glutamate is bound by residues 17-20 and lysine 117; that span reads RELK. L-homocysteine-binding positions include 434 to 436 and glutamate 487; that span reads IGS. L-methionine contacts are provided by residues 434 to 436 and glutamate 487; that span reads IGS. 5-methyltetrahydropteroyltri-L-glutamate-binding positions include 518 to 519 and tryptophan 564; that span reads RC. Aspartate 602 is an L-homocysteine binding site. Aspartate 602 provides a ligand contact to L-methionine. Glutamate 608 contacts 5-methyltetrahydropteroyltri-L-glutamate. 3 residues coordinate Zn(2+): histidine 644, cysteine 646, and glutamate 668. The active-site Proton donor is the histidine 697. Zn(2+) is bound at residue cysteine 729.

This sequence belongs to the vitamin-B12 independent methionine synthase family. Zn(2+) serves as cofactor.

It carries out the reaction 5-methyltetrahydropteroyltri-L-glutamate + L-homocysteine = tetrahydropteroyltri-L-glutamate + L-methionine. It functions in the pathway amino-acid biosynthesis; L-methionine biosynthesis via de novo pathway; L-methionine from L-homocysteine (MetE route): step 1/1. Functionally, catalyzes the transfer of a methyl group from 5-methyltetrahydrofolate to homocysteine resulting in methionine formation. This Yersinia pestis (strain Pestoides F) protein is 5-methyltetrahydropteroyltriglutamate--homocysteine methyltransferase.